Here is a 159-residue protein sequence, read N- to C-terminus: Large ribosomal subunit protein uL15 (159 aa).

Positions 14-44 (ASRKRVGRGRATGWGCTSGRGNKGQNSRAGA) are disordered. Over residues 23–35 (RATGWGCTSGRGN) the composition is skewed to gly residues.

Belongs to the universal ribosomal protein uL15 family. Part of the 50S ribosomal subunit.

Functionally, binds to the 23S rRNA. The protein is Large ribosomal subunit protein uL15 of Solidesulfovibrio magneticus (strain ATCC 700980 / DSM 13731 / RS-1) (Desulfovibrio magneticus).